The chain runs to 216 residues: Pyrophosphatase PpaX (216 aa).

The active-site Nucleophile is the Asp9.

Belongs to the HAD-like hydrolase superfamily. PpaX family. Mg(2+) serves as cofactor.

The catalysed reaction is diphosphate + H2O = 2 phosphate + H(+). Hydrolyzes pyrophosphate formed during P-Ser-HPr dephosphorylation by HPrK/P. Might play a role in controlling the intracellular pyrophosphate pool. This chain is Pyrophosphatase PpaX, found in Bacillus cereus (strain G9842).